The primary structure comprises 388 residues: Succinate--CoA ligase [ADP-forming] subunit beta (388 aa).

One can recognise an ATP-grasp domain in the interval 9 to 244; it reads KQLFAEYGLP…PSQEDSREAH (236 aa). ATP is bound by residues Lys46, 53–55, Glu99, Thr102, and Glu107; that span reads GRG. The Mg(2+) site is built by Asn199 and Asp213. Residues Asn264 and 321-323 contribute to the substrate site; that span reads GIV.

This sequence belongs to the succinate/malate CoA ligase beta subunit family. Heterotetramer of two alpha and two beta subunits. Mg(2+) is required as a cofactor.

It catalyses the reaction succinate + ATP + CoA = succinyl-CoA + ADP + phosphate. The catalysed reaction is GTP + succinate + CoA = succinyl-CoA + GDP + phosphate. Its pathway is carbohydrate metabolism; tricarboxylic acid cycle; succinate from succinyl-CoA (ligase route): step 1/1. Functionally, succinyl-CoA synthetase functions in the citric acid cycle (TCA), coupling the hydrolysis of succinyl-CoA to the synthesis of either ATP or GTP and thus represents the only step of substrate-level phosphorylation in the TCA. The beta subunit provides nucleotide specificity of the enzyme and binds the substrate succinate, while the binding sites for coenzyme A and phosphate are found in the alpha subunit. This Pseudoalteromonas translucida (strain TAC 125) protein is Succinate--CoA ligase [ADP-forming] subunit beta.